We begin with the raw amino-acid sequence, 103 residues long: Large ribosomal subunit protein bL21 (103 aa).

The protein belongs to the bacterial ribosomal protein bL21 family. As to quaternary structure, part of the 50S ribosomal subunit. Contacts protein L20.

Functionally, this protein binds to 23S rRNA in the presence of protein L20. The chain is Large ribosomal subunit protein bL21 from Salmonella agona (strain SL483).